Reading from the N-terminus, the 818-residue chain is SIT4-associating protein SAP4 (818 aa).

2 disordered regions span residues 33-60 and 499-526; these read ETSS…RDRS and TSNT…KNIK. The span at 509 to 518 shows a compositional bias: low complexity; sequence NNDSNDSNDN.

It belongs to the SAPS family. In terms of processing, hyperphosphorylated in the absence of SIT4.

Its function is as follows. Associates with the SIT4 phosphatase in a cell cycle dependent manner. May be directly or indirectly involved in SIT4-dependent functions in budding and in normal G1 cyclin expression. The chain is SIT4-associating protein SAP4 (SAP4) from Saccharomyces cerevisiae (strain ATCC 204508 / S288c) (Baker's yeast).